The chain runs to 384 residues: Bifunctional enzyme IspD/IspF (384 aa).

2-C-methyl-D-erythritol 4-phosphate cytidylyltransferase regions lie at residues 1 to 227 and 1 to 228; these read MAKV…EGEQ and MAKV…GEQR. The segment at 228–384 is 2-C-methyl-D-erythritol 2,4-cyclodiphosphate synthase; the sequence is RIGSGFDVHR…QATALITLPF (157 aa). A divalent metal cation contacts are provided by D234 and H236. 4-CDP-2-C-methyl-D-erythritol 2-phosphate contacts are provided by residues 234–236 and 260–261; these read DVH and HS. Residue H268 participates in a divalent metal cation binding. 4-CDP-2-C-methyl-D-erythritol 2-phosphate-binding positions include 282-284, 358-361, F365, and R368; these read DIG and TTTE.

In the N-terminal section; belongs to the IspD/TarI cytidylyltransferase family. IspD subfamily. This sequence in the C-terminal section; belongs to the IspF family. The cofactor is a divalent metal cation.

It catalyses the reaction 2-C-methyl-D-erythritol 4-phosphate + CTP + H(+) = 4-CDP-2-C-methyl-D-erythritol + diphosphate. The catalysed reaction is 4-CDP-2-C-methyl-D-erythritol 2-phosphate = 2-C-methyl-D-erythritol 2,4-cyclic diphosphate + CMP. Its pathway is isoprenoid biosynthesis; isopentenyl diphosphate biosynthesis via DXP pathway; isopentenyl diphosphate from 1-deoxy-D-xylulose 5-phosphate: step 2/6. The protein operates within isoprenoid biosynthesis; isopentenyl diphosphate biosynthesis via DXP pathway; isopentenyl diphosphate from 1-deoxy-D-xylulose 5-phosphate: step 4/6. Its function is as follows. Bifunctional enzyme that catalyzes the formation of 4-diphosphocytidyl-2-C-methyl-D-erythritol from CTP and 2-C-methyl-D-erythritol 4-phosphate (MEP) (IspD), and catalyzes the conversion of 4-diphosphocytidyl-2-C-methyl-D-erythritol 2-phosphate (CDP-ME2P) to 2-C-methyl-D-erythritol 2,4-cyclodiphosphate (ME-CPP) with a corresponding release of cytidine 5-monophosphate (CMP) (IspF). The sequence is that of Bifunctional enzyme IspD/IspF from Rhodospirillum rubrum (strain ATCC 11170 / ATH 1.1.1 / DSM 467 / LMG 4362 / NCIMB 8255 / S1).